Reading from the N-terminus, the 38-residue chain is Large ribosomal subunit protein bL36 (38 aa).

It belongs to the bacterial ribosomal protein bL36 family.

The chain is Large ribosomal subunit protein bL36 from Chloroflexus aurantiacus (strain ATCC 29366 / DSM 635 / J-10-fl).